The following is a 161-amino-acid chain: Regulator of ribonuclease activity A (161 aa).

Belongs to the RraA family. In terms of assembly, homotrimer. Binds to both RNA-binding sites in the C-terminal region of Rne and to RhlB.

It localises to the cytoplasm. Globally modulates RNA abundance by binding to RNase E (Rne) and regulating its endonucleolytic activity. Can modulate Rne action in a substrate-dependent manner by altering the composition of the degradosome. Modulates RNA-binding and helicase activities of the degradosome. The sequence is that of Regulator of ribonuclease activity A from Serratia proteamaculans (strain 568).